A 167-amino-acid chain; its full sequence is Small ribosomal subunit protein uS5 (167 aa).

Residues 11–74 (LQEKLIAVNR…EKARRAMINV (64 aa)) enclose the S5 DRBM domain.

The protein belongs to the universal ribosomal protein uS5 family. Part of the 30S ribosomal subunit. Contacts proteins S4 and S8.

Functionally, with S4 and S12 plays an important role in translational accuracy. Located at the back of the 30S subunit body where it stabilizes the conformation of the head with respect to the body. This is Small ribosomal subunit protein uS5 from Yersinia pseudotuberculosis serotype O:1b (strain IP 31758).